A 481-amino-acid chain; its full sequence is Cysteine--tRNA ligase (481 aa).

A Zn(2+)-binding site is contributed by Cys-29. Positions Val-31 to His-41 match the 'HIGH' region motif. Residues Cys-209, His-234, and Glu-238 each contribute to the Zn(2+) site. The 'KMSKS' region signature appears at Lys-266–Ser-270. Lys-269 is an ATP binding site.

This sequence belongs to the class-I aminoacyl-tRNA synthetase family. In terms of assembly, monomer. Requires Zn(2+) as cofactor.

The protein resides in the cytoplasm. It catalyses the reaction tRNA(Cys) + L-cysteine + ATP = L-cysteinyl-tRNA(Cys) + AMP + diphosphate. The protein is Cysteine--tRNA ligase of Geobacter sulfurreducens (strain ATCC 51573 / DSM 12127 / PCA).